Reading from the N-terminus, the 527-residue chain is Bifunctional purine biosynthesis protein PurH (527 aa).

Residues 1–149 form the MGS-like domain; sequence MTADLLPVRR…KNFARVAVAT (149 aa).

Belongs to the PurH family.

It carries out the reaction (6R)-10-formyltetrahydrofolate + 5-amino-1-(5-phospho-beta-D-ribosyl)imidazole-4-carboxamide = 5-formamido-1-(5-phospho-D-ribosyl)imidazole-4-carboxamide + (6S)-5,6,7,8-tetrahydrofolate. It catalyses the reaction IMP + H2O = 5-formamido-1-(5-phospho-D-ribosyl)imidazole-4-carboxamide. It participates in purine metabolism; IMP biosynthesis via de novo pathway; 5-formamido-1-(5-phospho-D-ribosyl)imidazole-4-carboxamide from 5-amino-1-(5-phospho-D-ribosyl)imidazole-4-carboxamide (10-formyl THF route): step 1/1. It functions in the pathway purine metabolism; IMP biosynthesis via de novo pathway; IMP from 5-formamido-1-(5-phospho-D-ribosyl)imidazole-4-carboxamide: step 1/1. The sequence is that of Bifunctional purine biosynthesis protein PurH from Stenotrophomonas maltophilia (strain R551-3).